The sequence spans 455 residues: MHTGCCTTKFDTEVLIIGNGPAGIALSSFLSGMHPFYDATHPHENVTVHEKLLANHDFSLIDQDLSWSSNLTELSQSGRPLSVLYDMLVRPGADMGSDAPGCIQWELNRRREIPHMVIGETKIGGSWNEYDAEMLTVSFSDWMDMPGFTMEQWLGGRPLVKRLPSVAIATYLKKYVERLRLRKKFHQYFVVNSIKKIGDVWVTSGKRSTDGRSFVIRSKQVVVACGKTSPRKLQLPNEEHCSSNIVYDVRALKERLDATKKTVIDEDENYDTPSTSTCSPVIVVGDGVSSVDCVRHCLERDIPVVHVIRRTLRELRNVMLSRLSPIHYSEYTDIYRMMIGRSVHKNYQRVLDASITSVSKIHVEITTGSNREIIEMPYSTVAVCIGRESHFSTVFENAHTFLDYQSEQDETLFAVGAYAGDHFVRFLVGGCLRVAQHITGAANNNNVTAKLLPIC.

It belongs to the OKL38 family. The cofactor is NADPH.

It localises to the midbody. Its function is as follows. Monooxygenase catalytic activity. Involved in regulation of cytokinesis; promotes rho-1/RhoA activity, probably acting locally at the midbody in late cytokinesis. Monooxygenase activity is required to stabilize structures between primordial germ cells (PGCs), termed intercellular bridges. Dispensable for fertility. This chain is Oxidative stress induced growth inhibitor homolog osgn-1, found in Caenorhabditis elegans.